The following is a 736-amino-acid chain: Elongation factor 2 (736 aa).

In terms of domain architecture, tr-type G spans 18–261; it reads EQVRNIGITA…MVVKFIPNPR (244 aa). Residues 27 to 34, 93 to 97, and 147 to 150 each bind GTP; these read AHVDHGKT, DTPGH, and NKVD. Residue histidine 602 is modified to Diphthamide.

Belongs to the TRAFAC class translation factor GTPase superfamily. Classic translation factor GTPase family. EF-G/EF-2 subfamily.

The protein resides in the cytoplasm. Its function is as follows. Catalyzes the GTP-dependent ribosomal translocation step during translation elongation. During this step, the ribosome changes from the pre-translocational (PRE) to the post-translocational (POST) state as the newly formed A-site-bound peptidyl-tRNA and P-site-bound deacylated tRNA move to the P and E sites, respectively. Catalyzes the coordinated movement of the two tRNA molecules, the mRNA and conformational changes in the ribosome. The polypeptide is Elongation factor 2 (Staphylothermus marinus (strain ATCC 43588 / DSM 3639 / JCM 9404 / F1)).